Reading from the N-terminus, the 141-residue chain is Keratin-associated protein 19-2 (141 aa).

A 48 X 2 AA repeats of G-[YCGS] region spans residues 5-135 (SGYSGGLGYG…CRRSSCCGGY (131 aa)).

This sequence belongs to the KRTAP type 19 family. In terms of assembly, interacts with hair keratins. Strong expression in narrowly defined pattern restricted to the lower and middle cortical regions of the hair shaft in both developing and cycling hair. During hair follicle regression (catagen), expression levels decrease until expression is no longer detectable in follicles at resting stage (telogen).

Functionally, in the hair cortex, hair keratin intermediate filaments are embedded in an interfilamentous matrix, consisting of hair keratin-associated proteins (KRTAP), which are essential for the formation of a rigid and resistant hair shaft through their extensive disulfide bond cross-linking with abundant cysteine residues of hair keratins. The matrix proteins include the high-sulfur and high-glycine-tyrosine keratins. The sequence is that of Keratin-associated protein 19-2 (Krtap19-2) from Mus musculus (Mouse).